A 1591-amino-acid chain; its full sequence is Rho guanine nucleotide exchange factor TIAM1 (1591 aa).

A disordered region spans residues Met1–Gln78. Gly2 carries the N-myristoyl glycine lipid modification. Positions Gln7 to Ala19 are enriched in basic and acidic residues. The span at Ser20 to His49 shows a compositional bias: basic residues. Over residues Glu53–Ser67 the composition is skewed to low complexity. Ser231 is modified (phosphoserine). Disordered stretches follow at residues Ser298 to Ala379 and Met393 to Gln422. Composition is skewed to polar residues over residues Gly300–Gln313 and Thr340–Thr361. 2 positions are modified to phosphoserine: Ser356 and Ser358. Over residues Gly367–Asp377 the composition is skewed to low complexity. The span at Gln412–Gln422 shows a compositional bias: polar residues. The 116-residue stretch at Val434 to Ala549 folds into the PH 1 domain. Ser695 carries the phosphoserine modification. The RBD domain maps to Thr765–Leu832. Phosphotyrosine; by NTRK2 is present on Tyr829. The region spanning Ser845–Ser908 is the PDZ domain. Residues Ser939–Gln1034 are disordered. Residues Leu958–Glu975 are compositionally biased toward polar residues. The segment covering Ala977–Asp990 has biased composition (acidic residues). Low complexity predominate over residues Pro1014–Ser1024. Polar residues predominate over residues Thr1025–Gln1034. In terms of domain architecture, DH spans Lys1040 to Met1234. The PH 2 domain maps to Asp1261–Lys1397. Position 1323 is a phosphotyrosine (Tyr1323). Residues Lys1404 and Lys1420 each participate in a glycyl lysine isopeptide (Lys-Gly) (interchain with G-Cter in ubiquitin) cross-link. The disordered stretch occupies residues Thr1456–Arg1482. Ser1519 bears the Phosphoserine mark.

Belongs to the TIAM family. In terms of assembly, component of the Par polarity complex, composed of at least phosphorylated PRKCZ, PARD3 and TIAM1. Interacts with NTRK2; mediates the activation of RAC1 by BDNF. Interacts with MAPK8IP2 and CD44. Interacts with BAIAP2. Interacts with EPHA8; regulates clathrin-mediated endocytosis of EPHA8. Interacts with PARD3. Interacts (via PDZ domain) with CNTNAP4, SDC1 and SDC3 (via C-terminus). Ubiquitinated. Undergoes 'Lys-48' ubiquitination at Lys-1404 and Lys-1420 by a CUL3(KBTBD6/7) E3 ubiquitin ligase complex composed of CUL3, RBX1, KBTBD6 and KBTBD7. 'Lys-48' ubiquitination at Lys-1404 and Lys-1420 triggers proteasomal degradation. Ubiquitination at Lys-1404 and Lys-1420 by CUL3(KBTBD6/7) also requires the membrane-associated protein GABARAP and may therefore be spatially restricted within the cell. As to expression, found in virtually all analyzed tumor cell lines including B- and T-lymphomas, neuroblastomas, melanomas and carcinomas.

The protein resides in the cell junction. Its subcellular location is the cell membrane. Its function is as follows. Guanyl-nucleotide exchange factor that activates RHO-like proteins and connects extracellular signals to cytoskeletal activities. Activates RAC1, CDC42, and to a lesser extent RHOA and their downstream signaling to regulate processes like cell adhesion and cell migration. This chain is Rho guanine nucleotide exchange factor TIAM1, found in Homo sapiens (Human).